A 105-amino-acid chain; its full sequence is MVSMQNDRIRIKLKAYDYRILDKAVAEIVDTARNTGAGVAGPIPLPTDIHKVTVNRSVHVDKKSREQFEMRVHKRLLDIMEPTQQTVDALGKLSLPAGVDVEIKL.

It belongs to the universal ribosomal protein uS10 family. As to quaternary structure, part of the 30S ribosomal subunit.

Functionally, involved in the binding of tRNA to the ribosomes. The polypeptide is Small ribosomal subunit protein uS10 (Solidesulfovibrio magneticus (strain ATCC 700980 / DSM 13731 / RS-1) (Desulfovibrio magneticus)).